The following is a 235-amino-acid chain: Phosphoribosylaminoimidazole-succinocarboxamide synthase (235 aa).

Belongs to the SAICAR synthetase family.

The catalysed reaction is 5-amino-1-(5-phospho-D-ribosyl)imidazole-4-carboxylate + L-aspartate + ATP = (2S)-2-[5-amino-1-(5-phospho-beta-D-ribosyl)imidazole-4-carboxamido]succinate + ADP + phosphate + 2 H(+). The protein operates within purine metabolism; IMP biosynthesis via de novo pathway; 5-amino-1-(5-phospho-D-ribosyl)imidazole-4-carboxamide from 5-amino-1-(5-phospho-D-ribosyl)imidazole-4-carboxylate: step 1/2. This Streptococcus mutans serotype c (strain ATCC 700610 / UA159) protein is Phosphoribosylaminoimidazole-succinocarboxamide synthase.